We begin with the raw amino-acid sequence, 348 residues long: MRAPASSAASNRPGPSNHPTPRWNSKQFFLTYPHCNLTPSELMKELFSRLTEKIPGYIKVSQEFHKDGDPHLHVLIQLNTKLCTRNPKFFDVQGFHPNIQPVRDAEKVFGYISKTNGDSDEMGELQLRIKKPEKPTRDQRMAMIIASSTNRNEYLSMVRKEFPFDWAIRLQQFEYSAAALFTEPPPVYQSPFPNEQIVCPPELVDIIDQEWNQQPNGPRRPRSIYICGPSRTGKTTWARNIGRHNYYNSTVDFTHYDKDAIYNVIDDVPFKFLPQWKALVGAQRDYIVNPKYGKKKKIPGGIPSIILTNDDEDWIKDMKPAQVEYLHANAHVHYMYEGQKFYVLPAEE.

Residues 1–17 (MRAPASSAASNRPGPSN) are compositionally biased toward low complexity. The tract at residues 1 to 22 (MRAPASSAASNRPGPSNHPTPR) is disordered. A CRESS-DNA virus Rep endonuclease domain is found at 22 to 125 (RWNSKQFFLT…NGDSDEMGEL (104 aa)). Positions 29-32 (FLTY) match the RCR-1 motif. A divalent metal cation contacts are provided by Glu-63, His-71, and His-73. The short motif at 71–73 (HLH) is the RCR-2 element. The active-site For DNA cleavage activity is the Tyr-111. An RCR-3 motif is present at residues 111–114 (YISK). The oligomerization stretch occupies residues 176–188 (SAAALFTEPPPVY). 228–235 (GPSRTGKT) serves as a coordination point for ATP. Residues 251 to 269 (VDFTHYDKDAIYNVIDDVP) are transactivation. Residues 291 to 301 (KYGKKKKIPGG) carry the Nuclear localization signal motif.

This sequence belongs to the geminiviridae Rep protein family. As to quaternary structure, homooligomer. Rep binds to repeated DNA motifs (iterons). Forms the O-complex, which is a Rep-DNA complex involved in the initiation of RCR. Part of the C- and V-complexes which are RepA-Rep-DNA complexes involved in the c-sense and v-sense transcription. Requires Mg(2+) as cofactor. The cofactor is Mn(2+).

The protein resides in the host nucleus. Functionally, essential for the replication of viral ssDNA. The closed circular ssDNA genome is first converted to a superhelical dsDNA. Rep binds a specific region at the genome origin of replication. It introduces an endonucleolytic nick within the conserved sequence 5'-TAATATTAC-3' in the intergenic region of the genome present in all geminiviruses, thereby initiating the rolling circle replication (RCR). Following cleavage, binds covalently to the 5'-phosphate of DNA as a tyrosyl ester. The cleavage gives rise to a free 3'-OH that serves as a primer for the cellular DNA polymerase. The polymerase synthesizes the (+) strand DNA by rolling circle mechanism. After one round of replication, a Rep-catalyzed nucleotidyl transfer reaction releases a circular single-stranded virus genome, thereby terminating the replication. Displays origin-specific DNA cleavage, nucleotidyl transferase, ATPase and helicase activities. Acts as an inhibitor of C-sense gene transcription. The sequence is that of Replication-associated protein from Miscanthus streak virus (isolate 91) (MiSV).